Here is a 313-residue protein sequence, read N- to C-terminus: Porphobilinogen deaminase (313 aa).

At Cys241 the chain carries S-(dipyrrolylmethanemethyl)cysteine.

It belongs to the HMBS family. As to quaternary structure, monomer. The cofactor is dipyrromethane.

It carries out the reaction 4 porphobilinogen + H2O = hydroxymethylbilane + 4 NH4(+). It functions in the pathway porphyrin-containing compound metabolism; protoporphyrin-IX biosynthesis; coproporphyrinogen-III from 5-aminolevulinate: step 2/4. Tetrapolymerization of the monopyrrole PBG into the hydroxymethylbilane pre-uroporphyrinogen in several discrete steps. In Idiomarina loihiensis (strain ATCC BAA-735 / DSM 15497 / L2-TR), this protein is Porphobilinogen deaminase.